A 121-amino-acid polypeptide reads, in one-letter code: Replication protein A 14 kDa subunit (121 aa).

Residues Lys39 and Lys88 each participate in a glycyl lysine isopeptide (Lys-Gly) (interchain with G-Cter in ubiquitin) cross-link.

Belongs to the replication factor A protein 3 family. Component of the canonical replication protein A complex (RPA), a heterotrimer composed of RPA1, RPA2 and RPA3. Also a component of the aRPA, the alternative replication protein A complex, a trimeric complex similar to the replication protein A complex/RPA but where RPA1 and RPA3 are associated with RPA4 instead of RPA2. Post-translationally, ubiquitinated by RFWD3 at stalled replication forks in response to DNA damage: ubiquitination by RFWD3 does not lead to degradation by the proteasome and promotes removal of the RPA complex from stalled replication forks, promoting homologous recombination.

The protein localises to the nucleus. Its function is as follows. As part of the heterotrimeric replication protein A complex (RPA/RP-A), binds and stabilizes single-stranded DNA intermediates, that form during DNA replication or upon DNA stress. It prevents their reannealing and in parallel, recruits and activates different proteins and complexes involved in DNA metabolism. Thereby, it plays an essential role both in DNA replication and the cellular response to DNA damage. In the cellular response to DNA damage, the RPA complex controls DNA repair and DNA damage checkpoint activation. Through recruitment of ATRIP activates the ATR kinase a master regulator of the DNA damage response. It is required for the recruitment of the DNA double-strand break repair factors RAD51 and RAD52 to chromatin, in response to DNA damage. Also recruits to sites of DNA damage proteins like XPA and XPG that are involved in nucleotide excision repair and is required for this mechanism of DNA repair. Also plays a role in base excision repair (BER), probably through interaction with UNG. Also recruits SMARCAL1/HARP, which is involved in replication fork restart, to sites of DNA damage. May also play a role in telomere maintenance. RPA3 has its own single-stranded DNA-binding activity and may be responsible for polarity of the binding of the complex to DNA. This is Replication protein A 14 kDa subunit (Rpa3) from Mus musculus (Mouse).